Reading from the N-terminus, the 573-residue chain is N(2)-(2-carboxyethyl)arginine synthase (573 aa).

2 residues coordinate substrate: Tyr271 and Asp301. 410–413 provides a ligand contact to thiamine diphosphate; the sequence is IGFF. A substrate-binding site is contributed by 414–415; sequence RH. 436-438 is a binding site for thiamine diphosphate; it reads SSF. A Mg(2+)-binding site is contributed by Asp463. Thiamine diphosphate contacts are provided by residues 464–465, 490–495, and Tyr561; these read GG and NDTNGL. Residues Asn490 and Thr492 each contribute to the Mg(2+) site. Leu571 serves as a coordination point for substrate.

As to quaternary structure, homotetramer; dimer of dimers. Requires Mg(2+) as cofactor. Thiamine diphosphate is required as a cofactor.

It catalyses the reaction D-glyceraldehyde 3-phosphate + L-arginine = N(2)-(2-carboxyethyl)-L-arginine + phosphate + H(+). Functionally, involved in the biosynthesis of the beta-lactamase inhibitor, clavulanic acid. Catalyzes the thiamine diphosphate (ThDP) dependent condensation of D-glyceraldehyde-3-phosphate (D-G3P) with L-arginine to yield the beta-amino acid, N2-(2-carboxyethyl)arginine (CEA) via a beta-elimination resulting in the formation of an enol which undergoes a second elimination to generate the alpha,beta-unsaturated acryloyl-ThDP. The chain is N(2)-(2-carboxyethyl)arginine synthase from Streptomyces clavuligerus.